The following is a 296-amino-acid chain: MERALNLAEEDLFHKSLSASAKRMESAFRPPQGLDLSQPGDRSPLHCYDGPDPSDLLRHHQHHHQASSGALGAAGANEALALAAANMCAKFGESAGRVSVAESSGGEEQSPDDDSDGRCELVLRSAEHRAQAGLKVDAPCATGGGKKSKEQRTLRLNINARERRRMHDLNDALDELRAVIPYAHSPSVRKLSKIATLLLAKNYILMQAQALEEMRRLVAYLNQGQAISAASIPNPAAAAAAAAAVALHPALGAYEPAAAVGYPFSTGLPTATSCPDKCALFNNISSSLCKQCTDKP.

Residues 26-70 form a disordered region; sequence SAFRPPQGLDLSQPGDRSPLHCYDGPDPSDLLRHHQHHHQASSGA. The 55-residue stretch at 153–207 folds into the bHLH domain; sequence TLRLNINARERRRMHDLNDALDELRAVIPYAHSPSVRKLSKIATLLLAKNYILMQ.

It localises to the nucleus. May act as a transcriptional repressor. This chain is Class E basic helix-loop-helix protein 22 (bhlhe22), found in Xenopus tropicalis (Western clawed frog).